The following is a 316-amino-acid chain: tRNA dimethylallyltransferase (316 aa).

17-24 (GPTASGKT) lines the ATP pocket. Residue 19–24 (TASGKT) participates in substrate binding. Interaction with substrate tRNA stretches follow at residues 42–45 (DSAL), 166–170 (QRLSR), 247–252 (RCVGYR), and 280–287 (KRQITWLR).

It belongs to the IPP transferase family. In terms of assembly, monomer. The cofactor is Mg(2+).

The catalysed reaction is adenosine(37) in tRNA + dimethylallyl diphosphate = N(6)-dimethylallyladenosine(37) in tRNA + diphosphate. Its function is as follows. Catalyzes the transfer of a dimethylallyl group onto the adenine at position 37 in tRNAs that read codons beginning with uridine, leading to the formation of N6-(dimethylallyl)adenosine (i(6)A). This is tRNA dimethylallyltransferase from Shigella boydii serotype 18 (strain CDC 3083-94 / BS512).